The following is a 585-amino-acid chain: Arginine--tRNA ligase (585 aa).

Positions 131–141 (ANPTGPMHVGH) match the 'HIGH' region motif.

The protein belongs to the class-I aminoacyl-tRNA synthetase family. In terms of assembly, monomer.

Its subcellular location is the cytoplasm. The enzyme catalyses tRNA(Arg) + L-arginine + ATP = L-arginyl-tRNA(Arg) + AMP + diphosphate. This Brucella melitensis biotype 1 (strain ATCC 23456 / CCUG 17765 / NCTC 10094 / 16M) protein is Arginine--tRNA ligase.